The primary structure comprises 374 residues: WW domain-binding protein 4 (374 aa).

The Matrin-type zinc-finger motif lies at 11-42; that stretch reads KFCDYCKCWIADNRPSVEFHERGKNHKENVAR. Over residues 91–109 the composition is skewed to polar residues; it reads EPTISPVTNTVQPTPTANQ. Disordered stretches follow at residues 91–126 and 188–328; these read EPTI…SKGR and SKWE…EAGA. Over residues 112–121 the composition is skewed to basic residues; that stretch reads EKKKKKKKKE. WW domains follow at residues 121-154 and 162-195; these read EASK…KPEG and TAAK…KPDD. Basic and acidic residues-rich tracts occupy residues 188-197 and 205-270; these read SKWEKPDDFI and SSKD…EKTT. S219, S226, and S228 each carry phosphoserine. Residues 315 to 325 are compositionally biased toward polar residues; that stretch reads STENECLSSSE. The interaction with SNRNP200 stretch occupies residues 355 to 373; the sequence is KKRRIENGKSRNLRQRGED.

Component of the spliceosome B complex. Associated with U2 snRNPs. Binds splicing factors SNRPB, SNRPC and SF1. Interacts via the WW domains with the Pro-rich domains of KHDRBS1/SAM68. Interacts via the WW domains with the Pro-rich domains of WBP11. Interacts with SNRNP200.

Its subcellular location is the nucleus. The protein localises to the nucleus speckle. Its function is as follows. Involved in pre-mRNA splicing as a component of the spliceosome. May play a role in cross-intron bridging of U1 and U2 snRNPs in the mammalian A complex. The polypeptide is WW domain-binding protein 4 (Wbp4) (Rattus norvegicus (Rat)).